The chain runs to 484 residues: tRNA-2-methylthio-N(6)-dimethylallyladenosine synthase (484 aa).

In terms of domain architecture, MTTase N-terminal spans 29 to 149 (GVFHIHTLGC…LPKLLDQNRA (121 aa)). Positions 38, 78, 112, 186, 190, and 193 each coordinate [4Fe-4S] cluster. The Radical SAM core domain occupies 172-401 (RASRISSWVA…VALQEQITEE (230 aa)). Residues 404-474 (ATFEGRDVEV…RHNLLADPDV (71 aa)) form the TRAM domain.

The protein belongs to the methylthiotransferase family. MiaB subfamily. In terms of assembly, monomer. [4Fe-4S] cluster serves as cofactor.

The protein resides in the cytoplasm. It carries out the reaction N(6)-dimethylallyladenosine(37) in tRNA + (sulfur carrier)-SH + AH2 + 2 S-adenosyl-L-methionine = 2-methylsulfanyl-N(6)-dimethylallyladenosine(37) in tRNA + (sulfur carrier)-H + 5'-deoxyadenosine + L-methionine + A + S-adenosyl-L-homocysteine + 2 H(+). Functionally, catalyzes the methylthiolation of N6-(dimethylallyl)adenosine (i(6)A), leading to the formation of 2-methylthio-N6-(dimethylallyl)adenosine (ms(2)i(6)A) at position 37 in tRNAs that read codons beginning with uridine. In Bifidobacterium longum (strain DJO10A), this protein is tRNA-2-methylthio-N(6)-dimethylallyladenosine synthase.